A 379-amino-acid chain; its full sequence is Diaminopimelate decarboxylase (379 aa).

K48 carries the post-translational modification N6-(pyridoxal phosphate)lysine. Pyridoxal 5'-phosphate is bound by residues G214 and 242–245 (EPGR). Residues R245, R280, and Y284 each contribute to the substrate site. Residue C309 is the Proton donor of the active site. Residues E310 and Y338 each contribute to the substrate site. Residue Y338 coordinates pyridoxal 5'-phosphate.

Belongs to the Orn/Lys/Arg decarboxylase class-II family. LysA subfamily. As to quaternary structure, homodimer. Requires pyridoxal 5'-phosphate as cofactor.

It carries out the reaction meso-2,6-diaminopimelate + H(+) = L-lysine + CO2. The protein operates within amino-acid biosynthesis; L-lysine biosynthesis via DAP pathway; L-lysine from DL-2,6-diaminopimelate: step 1/1. Functionally, specifically catalyzes the decarboxylation of meso-diaminopimelate (meso-DAP) to L-lysine. The sequence is that of Diaminopimelate decarboxylase from Deinococcus radiodurans (strain ATCC 13939 / DSM 20539 / JCM 16871 / CCUG 27074 / LMG 4051 / NBRC 15346 / NCIMB 9279 / VKM B-1422 / R1).